Here is a 188-residue protein sequence, read N- to C-terminus: Ion-translocating oxidoreductase complex subunit B (188 aa).

The interval 1–23 is hydrophobic; it reads MIEAAVSMSALGLGLGLLLGVAA. The 60-residue stretch at 29–88 folds into the 4Fe-4S domain; it reads ESPPILDAIEGILPGTNCGACGYPGCRGLAEAMSEGAAPVTACAPGGRDVALALAAIVET. [4Fe-4S] cluster contacts are provided by Cys-46, Cys-49, Cys-54, Cys-71, Cys-113, Cys-116, Cys-119, Cys-123, Cys-143, Cys-146, Cys-149, and Cys-153. 4Fe-4S ferredoxin-type domains are found at residues 104–133 and 134–163; these read TVAF…GANR and QIHT…ARVK.

It belongs to the 4Fe4S bacterial-type ferredoxin family. RnfB subfamily. As to quaternary structure, the complex is composed of six subunits: RnfA, RnfB, RnfC, RnfD, RnfE and RnfG. [4Fe-4S] cluster serves as cofactor.

Its subcellular location is the cellular chromatophore membrane. Its function is as follows. Part of a membrane-bound complex that couples electron transfer with translocation of ions across the membrane. The chain is Ion-translocating oxidoreductase complex subunit B from Cereibacter sphaeroides (strain ATCC 17029 / ATH 2.4.9) (Rhodobacter sphaeroides).